Here is a 520-residue protein sequence, read N- to C-terminus: Cobyric acid synthase (520 aa).

The GATase cobBQ-type domain maps to 275-453 (VLRVAVIRLP…WHGVLENDAF (179 aa)). Cys356 acts as the Nucleophile in catalysis. His445 is an active-site residue.

This sequence belongs to the CobB/CobQ family. CobQ subfamily.

Its pathway is cofactor biosynthesis; adenosylcobalamin biosynthesis. In terms of biological role, catalyzes amidations at positions B, D, E, and G on adenosylcobyrinic A,C-diamide. NH(2) groups are provided by glutamine, and one molecule of ATP is hydrogenolyzed for each amidation. The protein is Cobyric acid synthase of Frankia casuarinae (strain DSM 45818 / CECT 9043 / HFP020203 / CcI3).